A 354-amino-acid polypeptide reads, in one-letter code: GTPase Obg (354 aa).

In terms of domain architecture, Obg spans 1 to 159; sequence MKFVDEVKIH…RDLVLELKLL (159 aa). The region spanning 160–333 is the OBG-type G domain; that stretch reads ADVGIVGYPN…LLDAVGRALF (174 aa). Residues 166–173, 191–195, 212–215, 283–286, and 314–316 contribute to the GTP site; these read GYPNAGKS, FTTLT, DIPG, TKID, and SAV. The Mg(2+) site is built by serine 173 and threonine 193.

The protein belongs to the TRAFAC class OBG-HflX-like GTPase superfamily. OBG GTPase family. Monomer. The cofactor is Mg(2+).

It localises to the cytoplasm. Functionally, an essential GTPase which binds GTP, GDP and possibly (p)ppGpp with moderate affinity, with high nucleotide exchange rates and a fairly low GTP hydrolysis rate. Plays a role in control of the cell cycle, stress response, ribosome biogenesis and in those bacteria that undergo differentiation, in morphogenesis control. The chain is GTPase Obg from Anaeromyxobacter dehalogenans (strain 2CP-1 / ATCC BAA-258).